A 1653-amino-acid polypeptide reads, in one-letter code: Clathrin heavy chain (1653 aa).

Positions 1–483 are globular terminal domain; the sequence is MSDLPIEFTE…FDTTLALACY (483 aa). 7 WD40-like repeat regions span residues 23–66, 67–107, 108–152, 153–198, 199–263, 264–307, and 308–336; these read FLDF…KNMG, GDSA…LDEP, VIFW…ANLN, NTQI…QAID, GHVA…PDAT, NDFP…ITAE, and SVFTAAPYNHENGIACINKKGQVLAVEIS. Positions 453 to 469 are binding site for the uncoating ATPase, involved in lattice disassembly; it reads EKWLKEDKLECSEELGD. Residues 484–527 are flexible linker; sequence LRAGAHAKVISCLAELQQFEKIIPYCQKVGYQPNFLVLISSLIR. The tract at residues 528-1653 is heavy chain arm; it reads SSPDRASEFA…SAMNVQPTGF (1126 aa). CHCR repeat units lie at residues 543–689, 692–834, 839–978, 985–1130, 1134–1275, 1280–1426, and 1429–1572; these read NPET…QTVV, ATKF…DEAF, LQSV…QLID, IPEL…IPDA, YIKA…FKLA, LNLI…SLLV, and LTSL…REGF. A Glycyl lysine isopeptide (Lys-Gly) (interchain with G-Cter in ubiquitin) cross-link involves residue K1107. The tract at residues 1219-1528 is involved in binding clathrin light chain; it reads AARLCYSAVS…LLYRRNKKWA (310 aa).

This sequence belongs to the clathrin heavy chain family. In terms of assembly, clathrin triskelions, composed of 3 heavy chains and 3 light chains, are the basic subunits of the clathrin coat. Interacts with the auxilin-like clathrin uncoating factor SWA2. Interacts with INP53.

The protein localises to the cytoplasmic vesicle membrane. Its subcellular location is the membrane. The protein resides in the coated pit. Clathrin is the major protein of the polyhedral coat of coated pits and vesicles. In yeast, it is involved in the retention of proteins in an intracellular membrane compartment, presumably the trans-Golgi. The chain is Clathrin heavy chain (CHC1) from Saccharomyces cerevisiae (strain ATCC 204508 / S288c) (Baker's yeast).